Here is an 83-residue protein sequence, read N- to C-terminus: RNA-binding protein Hfq (83 aa).

Residues 9-68 form the Sm domain; it reads DPYLNILRKERIPVSIFLVNGIKLQGQIESFDQFVILLRNTVSQMVYKHAISTVVPSRNV.

It belongs to the Hfq family. As to quaternary structure, homohexamer.

Its function is as follows. RNA chaperone that binds small regulatory RNA (sRNAs) and mRNAs to facilitate mRNA translational regulation in response to envelope stress, environmental stress and changes in metabolite concentrations. Also binds with high specificity to tRNAs. This Chromohalobacter salexigens (strain ATCC BAA-138 / DSM 3043 / CIP 106854 / NCIMB 13768 / 1H11) protein is RNA-binding protein Hfq.